A 295-amino-acid polypeptide reads, in one-letter code: Phosphatidylglycerol--prolipoprotein diacylglyceryl transferase (295 aa).

7 helical membrane-spanning segments follow: residues 17 to 37 (IKVH…WLLG), 57 to 77 (LLFY…MLFY), 92 to 112 (VWDG…ACWW), 127 to 147 (FMAP…FIGA), 196 to 216 (QLYE…AVSA), 222 to 242 (YLVG…VEFV), and 255 to 275 (WLTR…VLLV). Arginine 140 contacts a 1,2-diacyl-sn-glycero-3-phospho-(1'-sn-glycerol).

It belongs to the Lgt family.

Its subcellular location is the cell inner membrane. The enzyme catalyses L-cysteinyl-[prolipoprotein] + a 1,2-diacyl-sn-glycero-3-phospho-(1'-sn-glycerol) = an S-1,2-diacyl-sn-glyceryl-L-cysteinyl-[prolipoprotein] + sn-glycerol 1-phosphate + H(+). It functions in the pathway protein modification; lipoprotein biosynthesis (diacylglyceryl transfer). Functionally, catalyzes the transfer of the diacylglyceryl group from phosphatidylglycerol to the sulfhydryl group of the N-terminal cysteine of a prolipoprotein, the first step in the formation of mature lipoproteins. The polypeptide is Phosphatidylglycerol--prolipoprotein diacylglyceryl transferase (Stenotrophomonas maltophilia (strain R551-3)).